The following is a 155-amino-acid chain: Large ribosomal subunit protein uL22 (155 aa).

Belongs to the universal ribosomal protein uL22 family. As to quaternary structure, part of the 50S ribosomal subunit.

Functionally, this protein binds specifically to 23S rRNA. It makes multiple contacts with different domains of the 23S rRNA in the assembled 50S subunit and ribosome. The globular domain of the protein is located near the polypeptide exit tunnel on the outside of the subunit, while an extended beta-hairpin is found that lines the wall of the exit tunnel in the center of the 70S ribosome. This chain is Large ribosomal subunit protein uL22, found in Archaeoglobus fulgidus (strain ATCC 49558 / DSM 4304 / JCM 9628 / NBRC 100126 / VC-16).